A 225-amino-acid polypeptide reads, in one-letter code: MSIKAIVVDTAGTTTDLNFIQDVLFPYSHQVMASFLAQNQQQVLVESCINDVRDIALEPSATVARVAEILQIWITEDRKLAPLKTLQGLIWKQGYSSLAFQGQIYPDFIEAISRYRQQGVAIYSFSSGSVEAQKLLFSHSEVGDLTPMFSGHFDMRMGNKLDKQAYLNIHNTLGLPPKQILFVSDTQEELTAAQAAGMMTCLMSRGDAFAPTEHKQVGSFTALNI.

The protein belongs to the HAD-like hydrolase superfamily. MasA/MtnC family. Monomer. The cofactor is Mg(2+).

The enzyme catalyses 5-methylsulfanyl-2,3-dioxopentyl phosphate + H2O = 1,2-dihydroxy-5-(methylsulfanyl)pent-1-en-3-one + phosphate. It participates in amino-acid biosynthesis; L-methionine biosynthesis via salvage pathway; L-methionine from S-methyl-5-thio-alpha-D-ribose 1-phosphate: step 3/6. It functions in the pathway amino-acid biosynthesis; L-methionine biosynthesis via salvage pathway; L-methionine from S-methyl-5-thio-alpha-D-ribose 1-phosphate: step 4/6. Its function is as follows. Bifunctional enzyme that catalyzes the enolization of 2,3-diketo-5-methylthiopentyl-1-phosphate (DK-MTP-1-P) into the intermediate 2-hydroxy-3-keto-5-methylthiopentenyl-1-phosphate (HK-MTPenyl-1-P), which is then dephosphorylated to form the acireductone 1,2-dihydroxy-3-keto-5-methylthiopentene (DHK-MTPene). The sequence is that of Enolase-phosphatase E1 from Shewanella denitrificans (strain OS217 / ATCC BAA-1090 / DSM 15013).